A 474-amino-acid chain; its full sequence is MTKKLHIKTWGCQMNEYDSSKMADLLASTHGYQLTTIPEEADLLLLNTCSIREKAQEKVFSLLGQWKLLKEKNPQLIIGVGGCVASQEGEQLRQRAPCVDVIFGPQTLHRLPEMINHVQGTNSPVVDISFPEIEKFDRLPEPRAEGPTAFVSIMEGCNKYCTFCVVPYTRGEEVSRPSDDILFEIAQLAAQGVREVNLLGQNVNAYRGATYDGDICSFAELLRLVAAIDGIDRVRFTTSHPIEFTDDIIDVYRDTPELVSFLHLPVQSGSDRILTMMKRAHTALEYKAIIRKLRQARPDIQISSDFIVGFPGETQQDFEQTMKLVADIHFDTSYSFIYSPRPGTPAADLPNNVSEEEKKQRLHILQQRISQQAMEISRKMVGTVQRVLVEGTSRKNVMELAGRTENNRVVNFEGSPDMIGKFVDVEIVNVYASSLRGILLRTEDQMDLRTHESPQSVIARTRKENEIGVGIYQP.

Positions 3 to 120 (KKLHIKTWGC…LPEMINHVQG (118 aa)) constitute an MTTase N-terminal domain. Positions 12, 49, 83, 157, 161, and 164 each coordinate [4Fe-4S] cluster. One can recognise a Radical SAM core domain in the interval 143-375 (RAEGPTAFVS…QQRISQQAME (233 aa)). In terms of domain architecture, TRAM spans 378-441 (RKMVGTVQRV…ASSLRGILLR (64 aa)).

The protein belongs to the methylthiotransferase family. MiaB subfamily. As to quaternary structure, monomer. It depends on [4Fe-4S] cluster as a cofactor.

The protein resides in the cytoplasm. It carries out the reaction N(6)-dimethylallyladenosine(37) in tRNA + (sulfur carrier)-SH + AH2 + 2 S-adenosyl-L-methionine = 2-methylsulfanyl-N(6)-dimethylallyladenosine(37) in tRNA + (sulfur carrier)-H + 5'-deoxyadenosine + L-methionine + A + S-adenosyl-L-homocysteine + 2 H(+). Its function is as follows. Catalyzes the methylthiolation of N6-(dimethylallyl)adenosine (i(6)A), leading to the formation of 2-methylthio-N6-(dimethylallyl)adenosine (ms(2)i(6)A) at position 37 in tRNAs that read codons beginning with uridine. The protein is tRNA-2-methylthio-N(6)-dimethylallyladenosine synthase of Yersinia pestis bv. Antiqua (strain Antiqua).